A 389-amino-acid polypeptide reads, in one-letter code: P2X purinoceptor 4a (389 aa).

Residues 1–36 (MSESVGCCDSVSQCFFDYYTSKILIIRSKKVGTLNR) are Cytoplasmic-facing. A helical membrane pass occupies residues 37 to 57 (FTQALVIAYVIGYVCVYNKGY). Residues 58-343 (QDTDTVLSSV…NIIPTLLNMG (286 aa)) lie on the Extracellular side of the membrane. ATP-binding residues include K70 and K72. CTP contacts are provided by K70 and K72. N-linked (GlcNAc...) asparagine glycans are attached at residues N78 and N113. 3 cysteine pairs are disulfide-bonded: C119/C168, C129/C152, and C135/C162. CTP is bound at residue R143. A glycan (N-linked (GlcNAc...) asparagine) is linked at N187. ATP is bound by residues T189 and L191. T189 provides a ligand contact to CTP. The N-linked (GlcNAc...) asparagine glycan is linked to N213. Intrachain disulfides connect C220–C230 and C264–C273. Positions 296, 298, and 316 each coordinate ATP. CTP-binding residues include N296, R298, and K316. Residues 344-364 (AGLALLGLVNVICDWIVLTFM) form a helical membrane-spanning segment. Residues 365–389 (KRKQHYKEQKYTYVDDFGLLHNEDK) lie on the Cytoplasmic side of the membrane.

This sequence belongs to the P2X receptor family. As to quaternary structure, functional P2XRs are organized as homomeric and heteromeric trimers. Forms homotrimer.

The protein localises to the cell membrane. It is found in the lysosome membrane. It carries out the reaction K(+)(in) = K(+)(out). It catalyses the reaction Na(+)(in) = Na(+)(out). The catalysed reaction is Ca(2+)(in) = Ca(2+)(out). Its activity is regulated as follows. Activated by ATP. pH-dependent and inhibited by acidic pH. In terms of biological role, ATP-gated nonselective transmembrane cation channel permeable to potassium, sodium and calcium. CTP, but not GTP or UTP, functions as a weak affinity agonist for P2RX4. Activated by extracellularly released ATP, it plays multiple role in immunity and central nervous system physiology. Could also function as an ATP-gated cation channel of lysosomal membranes. This Danio rerio (Zebrafish) protein is P2X purinoceptor 4a (p2rx4a).